Reading from the N-terminus, the 123-residue chain is Ribosome-binding factor A (123 aa).

This sequence belongs to the RbfA family. Monomer. Binds 30S ribosomal subunits, but not 50S ribosomal subunits or 70S ribosomes.

It localises to the cytoplasm. Its function is as follows. One of several proteins that assist in the late maturation steps of the functional core of the 30S ribosomal subunit. Associates with free 30S ribosomal subunits (but not with 30S subunits that are part of 70S ribosomes or polysomes). Required for efficient processing of 16S rRNA. May interact with the 5'-terminal helix region of 16S rRNA. The polypeptide is Ribosome-binding factor A (Delftia acidovorans (strain DSM 14801 / SPH-1)).